The primary structure comprises 411 residues: Serpin A3-2 (411 aa).

The first 24 residues, 1–24, serve as a signal peptide directing secretion; it reads MRAERTSFLLALGLLVAGIRSVHC. Asn100, Asn180, Asn230, and Asn264 each carry an N-linked (GlcNAc...) asparagine glycan.

Belongs to the serpin family. Homodimer.

Its subcellular location is the cytoplasmic vesicle. The protein localises to the secretory vesicle. The protein resides in the chromaffin granule. It is found in the secreted. In terms of biological role, serine protease inhibitor. The chain is Serpin A3-2 from Bos taurus (Bovine).